The primary structure comprises 209 residues: Ribosome maturation factor RimP (209 aa).

It belongs to the RimP family.

Its subcellular location is the cytoplasm. Required for maturation of 30S ribosomal subunits. This Bartonella bacilliformis (strain ATCC 35685 / KC583 / Herrer 020/F12,63) protein is Ribosome maturation factor RimP.